Consider the following 253-residue polypeptide: 2-C-methyl-D-erythritol 4-phosphate cytidylyltransferase (253 aa).

The protein belongs to the IspD/TarI cytidylyltransferase family. IspD subfamily.

It catalyses the reaction 2-C-methyl-D-erythritol 4-phosphate + CTP + H(+) = 4-CDP-2-C-methyl-D-erythritol + diphosphate. The protein operates within isoprenoid biosynthesis; isopentenyl diphosphate biosynthesis via DXP pathway; isopentenyl diphosphate from 1-deoxy-D-xylulose 5-phosphate: step 2/6. Functionally, catalyzes the formation of 4-diphosphocytidyl-2-C-methyl-D-erythritol from CTP and 2-C-methyl-D-erythritol 4-phosphate (MEP). The protein is 2-C-methyl-D-erythritol 4-phosphate cytidylyltransferase of Idiomarina loihiensis (strain ATCC BAA-735 / DSM 15497 / L2-TR).